Reading from the N-terminus, the 441-residue chain is GPI mannosyltransferase 2 (441 aa).

Helical transmembrane passes span 4 to 24 (MTVL…LILV), 35 to 55 (ILFG…PGLG), 115 to 135 (LLAL…IFGG), 143 to 163 (LCFL…LSAP), 165 to 185 (GEAL…SSVL), 199 to 223 (LLAA…GVLF), 249 to 269 (VIVL…YIAF), 306 to 326 (YWVV…ALLL), 361 to 381 (LAII…VQII), and 418 to 438 (VAVQ…GSFL).

Belongs to the PIGV family.

The protein resides in the endoplasmic reticulum membrane. It functions in the pathway glycolipid biosynthesis; glycosylphosphatidylinositol-anchor biosynthesis. Its function is as follows. Mannosyltransferase involved in glycosylphosphatidylinositol-anchor biosynthesis. Transfers the second mannose to the glycosylphosphatidylinositol during GPI precursor assembly. This chain is GPI mannosyltransferase 2 (gpi18), found in Aspergillus fumigatus (strain ATCC MYA-4609 / CBS 101355 / FGSC A1100 / Af293) (Neosartorya fumigata).